We begin with the raw amino-acid sequence, 143 residues long: MELNTIKPASGAKHAKRRVGRGIGSGLGKTAGRGHKGQKSRAGGYHKVGFEGGQMPLQRRLPKRGFKSLTLKYNAEVTLADLQVLAADEVDVPTLKQAGLVGERAKVVKVIKSGELSKKVVLKGIGATAGAKAAIEAAGGSVA.

A disordered region spans residues 1–51 (MELNTIKPASGAKHAKRRVGRGIGSGLGKTAGRGHKGQKSRAGGYHKVGFE). Residues 21-31 (RGIGSGLGKTA) are compositionally biased toward gly residues.

It belongs to the universal ribosomal protein uL15 family. In terms of assembly, part of the 50S ribosomal subunit.

Binds to the 23S rRNA. The protein is Large ribosomal subunit protein uL15 of Methylibium petroleiphilum (strain ATCC BAA-1232 / LMG 22953 / PM1).